The primary structure comprises 150 residues: Endoribonuclease YbeY (150 aa).

Zn(2+) is bound by residues His112, His116, and His122.

This sequence belongs to the endoribonuclease YbeY family. The cofactor is Zn(2+).

It localises to the cytoplasm. Functionally, single strand-specific metallo-endoribonuclease involved in late-stage 70S ribosome quality control and in maturation of the 3' terminus of the 16S rRNA. The sequence is that of Endoribonuclease YbeY from Geobacter metallireducens (strain ATCC 53774 / DSM 7210 / GS-15).